Consider the following 427-residue polypeptide: Enolase (427 aa).

Gln-163 serves as a coordination point for (2R)-2-phosphoglycerate. Glu-205 acts as the Proton donor in catalysis. Mg(2+) is bound by residues Asp-242, Glu-285, and Asp-312. (2R)-2-phosphoglycerate is bound by residues Lys-337, Arg-366, Ser-367, and Lys-388. The Proton acceptor role is filled by Lys-337.

It belongs to the enolase family. Mg(2+) serves as cofactor.

It is found in the cytoplasm. The protein resides in the secreted. The protein localises to the cell surface. It carries out the reaction (2R)-2-phosphoglycerate = phosphoenolpyruvate + H2O. It participates in carbohydrate degradation; glycolysis; pyruvate from D-glyceraldehyde 3-phosphate: step 4/5. Catalyzes the reversible conversion of 2-phosphoglycerate (2-PG) into phosphoenolpyruvate (PEP). It is essential for the degradation of carbohydrates via glycolysis. The polypeptide is Enolase (Polaromonas sp. (strain JS666 / ATCC BAA-500)).